Reading from the N-terminus, the 288-residue chain is Large ribosomal subunit protein uL2 (288 aa).

The segment at 232–265 is disordered; the sequence is GTAMNPVDHPHGGGEGKTKGKHPESPWGWKTKGY. Residues 239–255 show a composition bias toward basic and acidic residues; the sequence is DHPHGGGEGKTKGKHPE.

It belongs to the universal ribosomal protein uL2 family. As to quaternary structure, part of the 50S ribosomal subunit. Forms a bridge to the 30S subunit in the 70S ribosome.

In terms of biological role, one of the primary rRNA binding proteins. Required for association of the 30S and 50S subunits to form the 70S ribosome, for tRNA binding and peptide bond formation. It has been suggested to have peptidyltransferase activity; this is somewhat controversial. Makes several contacts with the 16S rRNA in the 70S ribosome. The sequence is that of Large ribosomal subunit protein uL2 from Hydrogenobaculum sp. (strain Y04AAS1).